We begin with the raw amino-acid sequence, 502 residues long: ATP synthase subunit alpha (502 aa).

169 to 176 (GDRQTGKT) provides a ligand contact to ATP.

This sequence belongs to the ATPase alpha/beta chains family. As to quaternary structure, F-type ATPases have 2 components, CF(1) - the catalytic core - and CF(0) - the membrane proton channel. CF(1) has five subunits: alpha(3), beta(3), gamma(1), delta(1), epsilon(1). CF(0) has three main subunits: a(1), b(2) and c(9-12). The alpha and beta chains form an alternating ring which encloses part of the gamma chain. CF(1) is attached to CF(0) by a central stalk formed by the gamma and epsilon chains, while a peripheral stalk is formed by the delta and b chains.

It is found in the cell membrane. The enzyme catalyses ATP + H2O + 4 H(+)(in) = ADP + phosphate + 5 H(+)(out). Its function is as follows. Produces ATP from ADP in the presence of a proton gradient across the membrane. The alpha chain is a regulatory subunit. This chain is ATP synthase subunit alpha, found in Clostridium perfringens (strain ATCC 13124 / DSM 756 / JCM 1290 / NCIMB 6125 / NCTC 8237 / Type A).